We begin with the raw amino-acid sequence, 99 residues long: Large ribosomal subunit protein bL21 (99 aa).

It belongs to the bacterial ribosomal protein bL21 family. In terms of assembly, part of the 50S ribosomal subunit. Contacts protein L20.

In terms of biological role, this protein binds to 23S rRNA in the presence of protein L20. In Mycoplasmopsis pulmonis (strain UAB CTIP) (Mycoplasma pulmonis), this protein is Large ribosomal subunit protein bL21.